The primary structure comprises 787 residues: MGRKVTVAVSTLNQWALDFEGNMVRILQSILEAKDMGASYRTGPELEVCGYSCEDHFREPDTFLHSWEVLLEVMMSPMCENMLVDVGMPVMHRNVAYNCRVAFFNRQILLIRPKMAMCDDGNYRESRWFTAWTKALQTEEYVLPRMIAQHTGQQTVPFGDAVIATRDTCLGYEICEELWNVRSKHIEMSLAGVELIVNSSGSYMELRKAHITSDLIRNASFKAGGAYLFSNLRGCDGQRVYFNGCSAIALNGEILARSQQFALQDVEVTLATIDLEEIRAYRVSLRSRCTAAASAAEYPRIHCDFEMSTHSDIFKTSTPPLNWPMHTPEEEIALGPACWLWDYLRRSGQGGFFLPLSGGVDSSSSATIVHSMCRQIVQAVQQGDAQVLHDIRQLLADSDYTPDNAAGLCNRLLVTCYMGSVNSSKETRRRAAQLANQLGSYHIEISIDSAVNALLSIFNAVTGLTPRFRTQGGCARQNLALQNMQSRIRMVLAYIFAQLTLWVRNRPGGLLVLGSANVDESLRGYLTKYDCSSADINPIGGISKMDLRRFLTYAKDKFNLPVLESIIDAPPTAELEPLQENGELQQTDEADMGMTYAELSQFGRLRKQSFCGPYSMFCHLVATWKSDLSPKEVAEKVKHFFLCYAINRHKMTVLTPSVHAESYSPDDNRFDHRPFLYRPNWSWQFKAIDDEAEKLQPIYTPSSAQLRPSSEDLLISTQRSSHLDDSKHSSPLSSASASASIDVGISTAAVPLPGAAAPGGLSKKPSGYSKVHVNVLGKIKDRTGIPV.

Positions 5–275 (VTVAVSTLNQ…VEVTLATIDL (271 aa)) constitute a CN hydrolase domain. The active-site Proton acceptor; for glutaminase activity is the E45. Catalysis depends on K114, which acts as the For glutaminase activity. The active-site Nucleophile; for glutaminase activity is the C175. The segment at 325–787 (MHTPEEEIAL…KIKDRTGIPV (463 aa)) is ligase. 355-362 (PLSGGVDS) provides a ligand contact to ATP. Residue S357 is part of the active site. S703 bears the Phosphoserine mark.

This sequence in the C-terminal section; belongs to the NAD synthetase family.

The catalysed reaction is deamido-NAD(+) + L-glutamine + ATP + H2O = L-glutamate + AMP + diphosphate + NAD(+) + H(+). The protein operates within cofactor biosynthesis; NAD(+) biosynthesis; NAD(+) from deamido-NAD(+) (L-Gln route): step 1/1. Catalyzes the ATP-dependent amidation of deamido-NAD to form NAD. Uses L-glutamine as a nitrogen source. Because of its role in energy metabolism, involved in the modulation of aged-related cardiac function, mobility, and lifespan. This is Glutamine-dependent NAD(+) synthetase from Drosophila melanogaster (Fruit fly).